Reading from the N-terminus, the 395-residue chain is Tyrosine--tRNA ligase (395 aa).

A 'HIGH' region motif is present at residues 42 to 51; sequence PTAPDIHLGH. Residues 226-230 carry the 'KMSKS' region motif; sequence KMSKS. ATP is bound at residue Lys229. Residues 334–394 enclose the S4 RNA-binding domain; the sequence is IGLATLLKEA…GKRKFARVTV (61 aa).

Belongs to the class-I aminoacyl-tRNA synthetase family. TyrS type 2 subfamily. Homodimer.

It is found in the cytoplasm. The catalysed reaction is tRNA(Tyr) + L-tyrosine + ATP = L-tyrosyl-tRNA(Tyr) + AMP + diphosphate + H(+). Catalyzes the attachment of tyrosine to tRNA(Tyr) in a two-step reaction: tyrosine is first activated by ATP to form Tyr-AMP and then transferred to the acceptor end of tRNA(Tyr). This is Tyrosine--tRNA ligase from Haemophilus influenzae (strain 86-028NP).